We begin with the raw amino-acid sequence, 720 residues long: Glutaryl-7-aminocephalosporanic-acid acylase (720 aa).

The first 29 residues, 1-29 (MLRVLHRAASALVMATVIGLAPGVAFALA), serve as a signal peptide directing secretion. Residues 188-198 (EGDPPDLADQG) constitute a propeptide, spacer peptide. Serine 199 functions as the Nucleophile in the catalytic mechanism. Active-site residues include histidine 221 and glutamate 653.

Belongs to the peptidase S45 family. As to quaternary structure, heterodimer of a small subunit and a large subunit processed from the same precursor.

It is found in the periplasm. The catalysed reaction is (7R)-7-(4-carboxybutanamido)cephalosporanate + H2O = (7R)-7-aminocephalosporanate + glutarate. Catalyzes the deacylation of 7 beta-(4-carboxybutanamido)cephalosporanic acid (glutaryl-7-aminocephalosporanic acid or GL-7-ACA) to 7-aminocephalosporanic acid (7-ACA). Cannot efficiently use cephalosporin C (CPC), penicillin G, or ampicillin as substrates. This is Glutaryl-7-aminocephalosporanic-acid acylase from Brevundimonas diminuta (Pseudomonas diminuta).